The sequence spans 243 residues: 4-phosphopantoate--beta-alanine ligase (243 aa).

ATP is bound by residues Arg15, Arg37, 176-178 (DLN), and 182-183 (RT).

Belongs to the archaeal phosphopantothenate synthetase family. In terms of assembly, homodimer.

The enzyme catalyses (R)-4-phosphopantoate + beta-alanine + ATP = (R)-4'-phosphopantothenate + AMP + diphosphate + H(+). It participates in cofactor biosynthesis; coenzyme A biosynthesis. In terms of biological role, catalyzes the condensation of (R)-4-phosphopantoate and beta-alanine to 4'-phosphopantothenate in the CoA biosynthesis pathway. This chain is 4-phosphopantoate--beta-alanine ligase, found in Methanospirillum hungatei JF-1 (strain ATCC 27890 / DSM 864 / NBRC 100397 / JF-1).